A 487-amino-acid chain; its full sequence is Mu-like prophage FluMu tail sheath protein (487 aa).

It belongs to the myoviridae tail sheath protein family.

In terms of biological role, major component of the tail. This Haemophilus influenzae (strain ATCC 51907 / DSM 11121 / KW20 / Rd) protein is Mu-like prophage FluMu tail sheath protein.